The sequence spans 644 residues: 3D-(3,5/4)-trihydroxycyclohexane-1,2-dione hydrolase (644 aa).

A thiamine diphosphate-binding site is contributed by Glu65. Residues 442-522 (SLPGDLQRMW…INVLLFDNSG (81 aa)) form a thiamine pyrophosphate binding region. Asp493 and Asn520 together coordinate Mg(2+).

This sequence belongs to the TPP enzyme family. Mg(2+) is required as a cofactor. Thiamine diphosphate serves as cofactor.

The catalysed reaction is 3D-3,5/4-trihydroxycyclohexane-1,2-dione + H2O = 5-deoxy-D-glucuronate + H(+). The protein operates within polyol metabolism; myo-inositol degradation into acetyl-CoA; acetyl-CoA from myo-inositol: step 3/7. Its function is as follows. Involved in the cleavage of the C1-C2 bond of 3D-(3,5/4)-trihydroxycyclohexane-1,2-dione (THcHDO) to yield 5-deoxy-glucuronate (5DG). The sequence is that of 3D-(3,5/4)-trihydroxycyclohexane-1,2-dione hydrolase from Bacillus anthracis (strain A0248).